We begin with the raw amino-acid sequence, 119 residues long: Large ribosomal subunit protein uL18 (119 aa).

This sequence belongs to the universal ribosomal protein uL18 family. In terms of assembly, part of the 50S ribosomal subunit; part of the 5S rRNA/L5/L18/L25 subcomplex. Contacts the 5S and 23S rRNAs.

Functionally, this is one of the proteins that bind and probably mediate the attachment of the 5S RNA into the large ribosomal subunit, where it forms part of the central protuberance. This chain is Large ribosomal subunit protein uL18, found in Sorangium cellulosum (strain So ce56) (Polyangium cellulosum (strain So ce56)).